The primary structure comprises 489 residues: Glutamate--tRNA ligase (489 aa).

The short motif at 12 to 22 is the 'HIGH' region element; the sequence is PSPTGIPHVGM. The 'KMSKS' region signature appears at 256 to 260; the sequence is KLSKR. Lys-259 contributes to the ATP binding site.

Belongs to the class-I aminoacyl-tRNA synthetase family. Glutamate--tRNA ligase type 1 subfamily. Monomer.

The protein localises to the cytoplasm. It carries out the reaction tRNA(Glu) + L-glutamate + ATP = L-glutamyl-tRNA(Glu) + AMP + diphosphate. Functionally, catalyzes the attachment of glutamate to tRNA(Glu) in a two-step reaction: glutamate is first activated by ATP to form Glu-AMP and then transferred to the acceptor end of tRNA(Glu). The protein is Glutamate--tRNA ligase of Mycobacterium ulcerans (strain Agy99).